The chain runs to 558 residues: MARVEL domain-containing protein 2 (558 aa).

A compositionally biased stretch (basic and acidic residues) spans 1-16; it reads MSNDGRSRNRDRRYDE. 2 disordered regions span residues 1–58 and 115–145; these read MSND…PPFG and CSPP…GTFS. Topologically, residues 1–194 are cytoplasmic; the sequence is MSNDGRSRNR…YMKSWAGLLR (194 aa). Residues 45 to 58 show a composition bias toward pro residues; the sequence is PLPPPPLPLQPPFG. Phosphoserine occurs at positions 116, 120, and 161. The residue at position 166 (threonine 166) is a Phosphothreonine. Positions 188-367 constitute an MARVEL domain; that stretch reads SWAGLLRILG…SALVCLKLWR (180 aa). A helical membrane pass occupies residues 195-215; it reads ILGVVELLLGAGVFACVTAYI. Topologically, residues 216-223 are extracellular; it reads HKDSEWYN. A helical transmembrane segment spans residues 224–244; the sequence is LFGYSQPYGMGGVGGLGSMYG. At 245-254 the chain is on the cytoplasmic side; the sequence is GYYYTGPKTP. A helical transmembrane segment spans residues 255–275; the sequence is FVLVVAGLAWITTIIILVLGM. Over 276-291 the chain is Extracellular; sequence SMYYRTILLDSNWWPL. The chain crosses the membrane as a helical span at residues 292-312; it reads TEFGINVALFILYMAAAIVYV. Residues 313 to 319 lie on the Cytoplasmic side of the membrane; sequence NDTNRGG. Residues 320–337 traverse the membrane as a helical segment; it reads LCYYPLFNTPVNAVFCRV. At 338-341 the chain is on the extracellular side; that stretch reads EGGQ. A helical membrane pass occupies residues 342 to 362; it reads IAAMIFLFVTMIVYLISALVC. Residues 363–558 are Cytoplasmic-facing; it reads LKLWRHEAAR…VMNWDVQGYS (196 aa). Serine 387 is subject to Phosphoserine. A Glycyl lysine isopeptide (Lys-Gly) (interchain with G-Cter in ubiquitin) cross-link involves residue lysine 412. Positions 439–548 form a coiled coil; that stretch reads MPDYVAKYPV…IKQRIQEYDK (110 aa). The OCEL domain maps to 440-551; the sequence is PDYVAKYPVI…RIQEYDKVMN (112 aa).

This sequence belongs to the ELL/occludin family. In terms of assembly, interacts with TJP1. Interacts with the ubiquitin ligase ITCH. Interacts (via C-terminal cytoplasmic domain) with LSR (via the cytoplasmic domain), ILDR1 and ILDR2; the interaction is required to recruit MARVELD2 to tricellular contacts. Ubiquitinated by ITCH; but this ubiquitination does not lead to proteasomal degradation. Polyubiquitinated at Lys-412 via 'Lys-63'-linked ubiquitin chains; deubiquitinated by USP53. In terms of processing, phosphorylated.

Its subcellular location is the cell membrane. It localises to the cell junction. It is found in the tight junction. Functionally, plays a role in the formation of tricellular tight junctions and of epithelial barriers. Required for normal hearing via its role in the separation of the endolymphatic and perilymphatic spaces of the organ of Corti in the inner ear, and for normal survival of hair cells in the organ of Corti. This is MARVEL domain-containing protein 2 from Homo sapiens (Human).